Reading from the N-terminus, the 530-residue chain is Phosphoenolpyruvate carboxykinase (ATP) (530 aa).

Substrate contacts are provided by R60, Y195, and K201. Residues K201, H221, and 237 to 245 (GLSGTGKTT) each bind ATP. Positions 201 and 221 each coordinate Mn(2+). D258 provides a ligand contact to Mn(2+). ATP-binding residues include E286, R324, and S449. Substrate is bound at residue R324.

It belongs to the phosphoenolpyruvate carboxykinase (ATP) family. Requires Mn(2+) as cofactor.

It localises to the cytoplasm. The catalysed reaction is oxaloacetate + ATP = phosphoenolpyruvate + ADP + CO2. It functions in the pathway carbohydrate biosynthesis; gluconeogenesis. Involved in the gluconeogenesis. Catalyzes the conversion of oxaloacetate (OAA) to phosphoenolpyruvate (PEP) through direct phosphoryl transfer between the nucleoside triphosphate and OAA. In Geotalea uraniireducens (strain Rf4) (Geobacter uraniireducens), this protein is Phosphoenolpyruvate carboxykinase (ATP).